The sequence spans 241 residues: MEIIPAIDIKDGRCVRLYQGDFAQMTVYADDPVAVARRWQAQGATRIHVVDLDGARTGRPQNVDAVLAITQTVQIPVQLGGGLRREEDVAAALALGVERVIIGTAAIVETELVARLLERFGERIIIGIDARNGMVATDGWTVTSTIAATDLAGQMAALGARRFIYTDISRDGALSGPNFTALAELVKPDGPAIIASGGIANLDHIRQLAQIGVEGVIIGKALYTGAIYLPEAIAIAQTATG.

The active-site Proton acceptor is aspartate 8. Aspartate 129 (proton donor) is an active-site residue.

It belongs to the HisA/HisF family.

The protein resides in the cytoplasm. It catalyses the reaction 1-(5-phospho-beta-D-ribosyl)-5-[(5-phospho-beta-D-ribosylamino)methylideneamino]imidazole-4-carboxamide = 5-[(5-phospho-1-deoxy-D-ribulos-1-ylimino)methylamino]-1-(5-phospho-beta-D-ribosyl)imidazole-4-carboxamide. Its pathway is amino-acid biosynthesis; L-histidine biosynthesis; L-histidine from 5-phospho-alpha-D-ribose 1-diphosphate: step 4/9. The protein is 1-(5-phosphoribosyl)-5-[(5-phosphoribosylamino)methylideneamino] imidazole-4-carboxamide isomerase of Chloroflexus aggregans (strain MD-66 / DSM 9485).